Here is a 212-residue protein sequence, read N- to C-terminus: Large ribosomal subunit protein uL3 (212 aa).

It belongs to the universal ribosomal protein uL3 family. As to quaternary structure, part of the 50S ribosomal subunit. Forms a cluster with proteins L14 and L19.

One of the primary rRNA binding proteins, it binds directly near the 3'-end of the 23S rRNA, where it nucleates assembly of the 50S subunit. The protein is Large ribosomal subunit protein uL3 of Acetivibrio thermocellus (strain ATCC 27405 / DSM 1237 / JCM 9322 / NBRC 103400 / NCIMB 10682 / NRRL B-4536 / VPI 7372) (Clostridium thermocellum).